Consider the following 536-residue polypeptide: SNW domain-containing protein 1 (536 aa).

The interval 1–44 (MALTSFLPAPTQLSQDQLEAEERARSQRSLQTSLVSSRREPPPY) is disordered. The residue at position 2 (Ala2) is an N-acetylalanine. Phosphoserine is present on Ser14. Polar residues predominate over residues 27–36 (QRSLQTSLVS). The interval 59–79 (GDGGAFPEIHVAQYPLDMGRK) is interaction with PPIL1. Glycyl lysine isopeptide (Lys-Gly) (interchain with G-Cter in SUMO2) cross-links involve residues Lys81, Lys97, Lys115, Lys122, Lys141, Lys158, and Lys170. The interval 174 to 339 (AQYIRYTPSQ…KARERRAGIK (166 aa)) is SNW. Ser182 and Ser190 each carry phosphoserine. Lys193 participates in a covalent cross-link: Glycyl lysine isopeptide (Lys-Gly) (interchain with G-Cter in SUMO2). Positions 212–233 (FKINKKIPRGPPSPPAPVMHSP) are disordered. Residues Ser224, Ser232, and Ser234 each carry the phosphoserine modification. Glycyl lysine isopeptide (Lys-Gly) (interchain with G-Cter in SUMO2) cross-links involve residues Lys240, Lys258, Lys286, Lys339, Lys344, Lys416, and Lys441. The tract at residues 311-386 (KMAQKEKEKH…RSKLQRNENR (76 aa)) is disordered. Ser446 carries the post-translational modification Phosphoserine. Lys452 is covalently cross-linked (Glycyl lysine isopeptide (Lys-Gly) (interchain with G-Cter in SUMO2)). Composition is skewed to basic and acidic residues over residues 467–489 (IKTNRFVPDKEFSGSDRKQRGRE) and 503–530 (KFLEEAKQHGGSKRPSDSSRPKEHEHEG). The interval 467-536 (IKTNRFVPDK…EHEGKKRRKE (70 aa)) is disordered. Ser479 and Ser481 each carry phosphoserine. Lys509 participates in a covalent cross-link: Glycyl lysine isopeptide (Lys-Gly) (interchain with G-Cter in SUMO2).

Belongs to the SNW family. As to quaternary structure, identified in the spliceosome C complex. Associates with U4/U6-U5 tri-small nuclear ribonucleoproteins (U4/U6-U5 tri-snRNPs). Component of the minor spliceosome, which splices U12-type introns. Interacts with SKI, SMAD2,SMAD3, RBPJ, RB1, PABPN1, MAGEA1, SIRT1, FOXN3, U2AF2, PPIL1, DAXX and ATP1B4. Interacts with VDR and RXRA; preferentially associates with VDR:RXRA heterodimers. Interacts with NCOR2. Interacts with MAML1. Interacts with NOTCH1 NICD; the interaction involves multimerized NOTCH1 NICD. Forms a complex with NOTCH1 NICD and MAML1; the association is dissociated by RBPJ. Associates with positive transcription elongation factor b (P-TEFb). Component of the SNARP complex which consists at least of SNIP1, SNW1, THRAP3, BCLAF1 and PNN.

Its subcellular location is the nucleus. Its function is as follows. Involved in pre-mRNA splicing as component of the spliceosome. As a component of the minor spliceosome, involved in the splicing of U12-type introns in pre-mRNAs. Required in the specific splicing of CDKN1A pre-mRNA; the function probably involves the recruitment of U2AF2 to the mRNA. May recruit PPIL1 to the spliceosome. May be involved in cyclin-D1/CCND1 mRNA stability through the SNARP complex which associates with both the 3'end of the CCND1 gene and its mRNA. Involved in transcriptional regulation. Modulates TGF-beta-mediated transcription via association with SMAD proteins, MYOD1-mediated transcription via association with PABPN1, RB1-mediated transcriptional repression, and retinoid-X receptor (RXR)- and vitamin D receptor (VDR)-dependent gene transcription in a cell line-specific manner probably involving coactivators NCOA1 and GRIP1. Is involved in NOTCH1-mediated transcriptional activation. Binds to multimerized forms of Notch intracellular domain (NICD) and is proposed to recruit transcriptional coactivators such as MAML1 to form an intermediate preactivation complex which associates with DNA-bound CBF-1/RBPJ to form a transcriptional activation complex by releasing SNW1 and redundant NOTCH1 NICD. The polypeptide is SNW domain-containing protein 1 (Snw1) (Mus musculus (Mouse)).